Consider the following 507-residue polypeptide: UDP-N-acetylglucosamine 1-carboxyvinyltransferase 1 (507 aa).

A phosphoenolpyruvate-binding site is contributed by 41–42 (KN). Residue R112 participates in UDP-N-acetyl-alpha-D-glucosamine binding. C136 acts as the Proton donor in catalysis. 2-(S-cysteinyl)pyruvic acid O-phosphothioketal is present on C136. Residues 141 to 145 (RPIDL), D328, and L350 each bind UDP-N-acetyl-alpha-D-glucosamine.

Belongs to the EPSP synthase family. MurA subfamily.

It localises to the cytoplasm. The catalysed reaction is phosphoenolpyruvate + UDP-N-acetyl-alpha-D-glucosamine = UDP-N-acetyl-3-O-(1-carboxyvinyl)-alpha-D-glucosamine + phosphate. Its pathway is cell wall biogenesis; peptidoglycan biosynthesis. Functionally, cell wall formation. Adds enolpyruvyl to UDP-N-acetylglucosamine. The polypeptide is UDP-N-acetylglucosamine 1-carboxyvinyltransferase 1 (Legionella pneumophila (strain Lens)).